The chain runs to 122 residues: MAYDKQALIDQLSTLTIMELADLIDGLKEQWGVTAAVAVAGPGAGAAAPAAEEKTEFDVILVDAGASKINVIKELRAITGLGLKEAKDLSEKGGAIKEGVSKEDAEKFKAQLEGAGAKVEIR.

Belongs to the bacterial ribosomal protein bL12 family. Homodimer. Part of the ribosomal stalk of the 50S ribosomal subunit. Forms a multimeric L10(L12)X complex, where L10 forms an elongated spine to which 2 to 4 L12 dimers bind in a sequential fashion. Binds GTP-bound translation factors.

In terms of biological role, forms part of the ribosomal stalk which helps the ribosome interact with GTP-bound translation factors. Is thus essential for accurate translation. The chain is Large ribosomal subunit protein bL12 from Deinococcus geothermalis (strain DSM 11300 / CIP 105573 / AG-3a).